The sequence spans 71 residues: Small ribosomal subunit protein bS21 (71 aa).

The interval 43 to 71 is disordered; sequence TERKRAKASAVKRHAKKLARENARRTRLY. Basic residues predominate over residues 46–59; sequence KRAKASAVKRHAKK. The span at 60–71 shows a compositional bias: basic and acidic residues; it reads LARENARRTRLY.

It belongs to the bacterial ribosomal protein bS21 family.

This chain is Small ribosomal subunit protein bS21, found in Edwardsiella ictaluri (strain 93-146).